Here is a 424-residue protein sequence, read N- to C-terminus: Probable ribonuclease FAU-1 (424 aa).

The protein belongs to the FAU-1 family.

In terms of biological role, probable RNase involved in rRNA stability through maturation and/or degradation of precursor rRNAs. Binds to RNA in loop regions with AU-rich sequences. This Saccharolobus islandicus (strain Y.G.57.14 / Yellowstone #1) (Sulfolobus islandicus) protein is Probable ribonuclease FAU-1.